Reading from the N-terminus, the 217-residue chain is Probable transaldolase (217 aa).

Lys-83 acts as the Schiff-base intermediate with substrate in catalysis.

Belongs to the transaldolase family. Type 3B subfamily.

The protein localises to the cytoplasm. It catalyses the reaction D-sedoheptulose 7-phosphate + D-glyceraldehyde 3-phosphate = D-erythrose 4-phosphate + beta-D-fructose 6-phosphate. It functions in the pathway carbohydrate degradation; pentose phosphate pathway; D-glyceraldehyde 3-phosphate and beta-D-fructose 6-phosphate from D-ribose 5-phosphate and D-xylulose 5-phosphate (non-oxidative stage): step 2/3. Its function is as follows. Transaldolase is important for the balance of metabolites in the pentose-phosphate pathway. This chain is Probable transaldolase, found in Bartonella quintana (strain Toulouse) (Rochalimaea quintana).